Reading from the N-terminus, the 336-residue chain is Ornithine carbamoyltransferase, catabolic (336 aa).

Carbamoyl phosphate is bound by residues 57–60 (STRT), Gln-84, Arg-108, and 135–138 (HPTQ). L-ornithine-binding positions include Asn-168, Asp-232, and 236-237 (SM). Residues 274–275 (CL) and Arg-321 each bind carbamoyl phosphate.

The protein belongs to the aspartate/ornithine carbamoyltransferase superfamily. OTCase family. As to quaternary structure, nonameric or dodecamer (tetramer of trimers).

Its subcellular location is the cytoplasm. The catalysed reaction is carbamoyl phosphate + L-ornithine = L-citrulline + phosphate + H(+). The protein operates within amino-acid degradation; L-arginine degradation via ADI pathway; carbamoyl phosphate from L-arginine: step 2/2. Inhibited by 2-aminopentanoic acid (norvaline). Activated by phosphate and nucleoside monophosphates such as AMP, GMP, CMP, UMP. Allosterically inhibited by the polyamines such as spermidine and putrescine. Functionally, involved in the catabolism of arginine. Catalyzes the phosphorolysis of citrulline, the reverse reaction of the biosynthetic one, yielding ornithine and carbamoyl phosphate which serve to generate ATP from ADP. This catabolic OTCase does not carry out the biosynthetic reaction because of a poor affinity and a marked cooperativity for carbamoyl phosphate. The protein is Ornithine carbamoyltransferase, catabolic of Pseudomonas aeruginosa (strain ATCC 15692 / DSM 22644 / CIP 104116 / JCM 14847 / LMG 12228 / 1C / PRS 101 / PAO1).